The chain runs to 144 residues: Major allergen Blo t 12 (144 aa).

An N-terminal signal peptide occupies residues 1–20 (MKSVLIFLVAIALFSANIVS). The segment at 24-77 (QTTRGRHTEPDDHHEKPTTQCTHEETTSTQHHHEEVVTTQTPHHEEKTTTEETH) is disordered. One can recognise a Chitin-binding type-2 domain in the interval 92–144 (HVVCHEEGPIHIQEMCNKYIICSKSGSLWYITVMPCSIGTKFDPISRNCVLDN). C127 and C140 are joined by a disulfide.

The protein is Major allergen Blo t 12 of Blomia tropicalis (Mite).